The following is a 172-amino-acid chain: Galectin-related protein (172 aa).

Alanine 2 is subject to N-acetylalanine. Serine 22 and serine 25 each carry phosphoserine. Residues 39–168 (PFCGHIKGGM…TIKINGDLQI (130 aa)) enclose the Galectin domain.

In terms of assembly, monomer.

Does not bind lactose, and may not bind carbohydrates. The polypeptide is Galectin-related protein (LGALSL) (Homo sapiens (Human)).